The primary structure comprises 133 residues: MAKEFGRPQRVAQEMQKEIAIILQREIKDPRLGMMTTVSGVEMSRDLAYAKVFVTFLNDQDEAAVKNGIKALQEASGFIRSLLGKAMRLRIVPELTFFYDNSLVEGMRMSNLVTNVVKHDEERRVNPDDSKED.

It belongs to the RbfA family. As to quaternary structure, monomer. Binds 30S ribosomal subunits, but not 50S ribosomal subunits or 70S ribosomes.

The protein resides in the cytoplasm. Functionally, one of several proteins that assist in the late maturation steps of the functional core of the 30S ribosomal subunit. Associates with free 30S ribosomal subunits (but not with 30S subunits that are part of 70S ribosomes or polysomes). Required for efficient processing of 16S rRNA. May interact with the 5'-terminal helix region of 16S rRNA. In Salmonella heidelberg (strain SL476), this protein is Ribosome-binding factor A.